A 124-amino-acid chain; its full sequence is S-adenosylmethionine decarboxylase proenzyme (124 aa).

Ser70 (schiff-base intermediate with substrate; via pyruvic acid) is an active-site residue. A Pyruvic acid (Ser); by autocatalysis modification is found at Ser70. Catalysis depends on His75, which acts as the Proton acceptor; for processing activity. The Proton donor; for catalytic activity role is filled by Cys90.

The protein belongs to the prokaryotic AdoMetDC family. Type 1 subfamily. As to quaternary structure, heterotetramer of two alpha and two beta chains arranged as a dimer of alpha/beta heterodimers. Pyruvate is required as a cofactor. Post-translationally, is synthesized initially as an inactive proenzyme. Formation of the active enzyme involves a self-maturation process in which the active site pyruvoyl group is generated from an internal serine residue via an autocatalytic post-translational modification. Two non-identical subunits are generated from the proenzyme in this reaction, and the pyruvate is formed at the N-terminus of the alpha chain, which is derived from the carboxyl end of the proenzyme. The post-translation cleavage follows an unusual pathway, termed non-hydrolytic serinolysis, in which the side chain hydroxyl group of the serine supplies its oxygen atom to form the C-terminus of the beta chain, while the remainder of the serine residue undergoes an oxidative deamination to produce ammonia and the pyruvoyl group blocking the N-terminus of the alpha chain.

It catalyses the reaction S-adenosyl-L-methionine + H(+) = S-adenosyl 3-(methylsulfanyl)propylamine + CO2. Its pathway is amine and polyamine biosynthesis; S-adenosylmethioninamine biosynthesis; S-adenosylmethioninamine from S-adenosyl-L-methionine: step 1/1. In terms of biological role, catalyzes the decarboxylation of S-adenosylmethionine to S-adenosylmethioninamine (dcAdoMet), the propylamine donor required for the synthesis of the polyamines spermine and spermidine from the diamine putrescine. This is S-adenosylmethionine decarboxylase proenzyme from Pyrobaculum neutrophilum (strain DSM 2338 / JCM 9278 / NBRC 100436 / V24Sta) (Thermoproteus neutrophilus).